Reading from the N-terminus, the 575-residue chain is G protein-coupled receptor kinase 4 (575 aa).

Met1 is subject to N-acetylmethionine. An N-terminal region spans residues 1-153; that stretch reads MELENFMANT…DCAGVIYKYL (153 aa). In terms of domain architecture, RGS spans 51–171; the sequence is DFSSLCDQQP…QESTYYNRFL (121 aa). One can recognise a Protein kinase domain in the interval 186–448; sequence FRQYRVLGKG…ASAVKQHPIF (263 aa). Residues 192–200 and Lys215 each bind ATP; that span reads LGKGGFGEV. Asp311 (proton acceptor) is an active-site residue. One can recognise an AGC-kinase C-terminal domain in the interval 449–514; sequence KDINFSRLEA…GCVTIPWQNE (66 aa). Position 484 is a phosphoserine (Ser484).

This sequence belongs to the protein kinase superfamily. AGC Ser/Thr protein kinase family. GPRK subfamily. Interacts with DRD3. In terms of processing, palmitoylated. In terms of tissue distribution, isoform GRK4A is expressed in testis. Isoform GRK4B is heterogeneously distributed in the kidney, with 20-fold enrichment in the outer medulla. Has a widespread but low level of expression in tissues other than testis.

It localises to the cytoplasm. The protein resides in the cell cortex. It catalyses the reaction [G-protein-coupled receptor] + ATP = [G-protein-coupled receptor]-phosphate + ADP + H(+). Inhibited by heparin. Functionally, specifically phosphorylates the activated forms of G protein-coupled receptors. Plays an important role in the regulation of renal sodium handling and blood pressure. This Rattus norvegicus (Rat) protein is G protein-coupled receptor kinase 4 (Grk4).